Consider the following 365-residue polypeptide: Flagellar P-ring protein (365 aa).

A signal peptide spans 1 to 19 (MIKFLSALILLLVTTAAQA).

This sequence belongs to the FlgI family. The basal body constitutes a major portion of the flagellar organelle and consists of four rings (L,P,S, and M) mounted on a central rod.

The protein localises to the periplasm. It is found in the bacterial flagellum basal body. Its function is as follows. Assembles around the rod to form the L-ring and probably protects the motor/basal body from shearing forces during rotation. This Shigella flexneri serotype 5b (strain 8401) protein is Flagellar P-ring protein.